The sequence spans 810 residues: Phenylalanine--tRNA ligase beta subunit (810 aa).

The tRNA-binding domain maps to 39-154 (APPTEKIVVG…EGTPVGQDIR (116 aa)). The B5 domain maps to 405 to 480 (PQRAPVSMRA…RIYGFEKIPA (76 aa)). Residues D458, D464, E467, and E468 each coordinate Mg(2+). In terms of domain architecture, FDX-ACB spans 707–809 (SKFPPVRRDI…MARVYGARLR (103 aa)).

The protein belongs to the phenylalanyl-tRNA synthetase beta subunit family. Type 1 subfamily. As to quaternary structure, tetramer of two alpha and two beta subunits. Requires Mg(2+) as cofactor.

It is found in the cytoplasm. The enzyme catalyses tRNA(Phe) + L-phenylalanine + ATP = L-phenylalanyl-tRNA(Phe) + AMP + diphosphate + H(+). The polypeptide is Phenylalanine--tRNA ligase beta subunit (Burkholderia mallei (strain ATCC 23344)).